A 427-amino-acid polypeptide reads, in one-letter code: Glutamate-1-semialdehyde 2,1-aminomutase (427 aa).

An N6-(pyridoxal phosphate)lysine modification is found at Lys265.

Belongs to the class-III pyridoxal-phosphate-dependent aminotransferase family. HemL subfamily. In terms of assembly, homodimer. Requires pyridoxal 5'-phosphate as cofactor.

It is found in the cytoplasm. It catalyses the reaction (S)-4-amino-5-oxopentanoate = 5-aminolevulinate. The protein operates within porphyrin-containing compound metabolism; protoporphyrin-IX biosynthesis; 5-aminolevulinate from L-glutamyl-tRNA(Glu): step 2/2. The sequence is that of Glutamate-1-semialdehyde 2,1-aminomutase from Pseudomonas putida (strain ATCC 47054 / DSM 6125 / CFBP 8728 / NCIMB 11950 / KT2440).